Here is a 527-residue protein sequence, read N- to C-terminus: Putative GTP-binding protein 6 (527 aa).

A Hflx-type G domain is found at 306–470; the sequence is PIISILGYTN…QVETAVMKST (165 aa). Residues 312 to 319, 338 to 342, 360 to 363, 429 to 432, and 448 to 450 contribute to the GTP site; these read GYTNSGKT, FATLD, DTIG, NKID, and SAL. Mg(2+)-binding residues include T319 and T340.

The protein belongs to the TRAFAC class OBG-HflX-like GTPase superfamily. HflX GTPase family. Requires Mg(2+) as cofactor.

This is Putative GTP-binding protein 6 (gtpbp6) from Xenopus laevis (African clawed frog).